A 310-amino-acid polypeptide reads, in one-letter code: Taste receptor type 2 member 125 (310 aa).

Over 1 to 2 the chain is Extracellular; that stretch reads MG. Residues 3-23 form a helical membrane-spanning segment; the sequence is IVIGIICAFIIIVQFIIGNVA. Over 24–46 the chain is Cytoplasmic; it reads NGFIALVNIIDWVKRRKISLVDQ. A helical membrane pass occupies residues 47–67; that stretch reads IITALAISRIDMLCSTFLIVL. Topologically, residues 68–87 are extracellular; sequence ITSLYPDLNTAVNMVKISNN. The chain crosses the membrane as a helical span at residues 88–108; it reads IWIVANHFSIWLATSLSIFYF. At 109–128 the chain is on the cytoplasmic side; that stretch reads LKIANFSNYVFLCLRWRLSK. Residues 129 to 149 traverse the membrane as a helical segment; the sequence is VVSVTLLLSLVLLLMNILIMN. Over 150-185 the chain is Extracellular; that stretch reads MHIDTWSDGFKRNVSFGFRSKNCTRFFKLALLINTT. Residues Asn162, Asn171, and Asn183 are each glycosylated (N-linked (GlcNAc...) asparagine). The helical transmembrane segment at 186–206 threads the bilayer; sequence FTCVPFTVSMVAFLLLIFSLW. At 207–232 the chain is on the cytoplasmic side; it reads RHLKNMQYHAKGSRDPSTAVHIKALQ. Residues 233-253 form a helical membrane-spanning segment; that stretch reads MVVVFVLFYTFFFLSLAIQLW. The Extracellular segment spans residues 254-261; that stretch reads TSESLEKN. A helical membrane pass occupies residues 262-282; it reads NLFYVTLIITFPSVHSCMLIL. The Cytoplasmic segment spans residues 283-310; it reads RNSKLRQASLLVLWWLLCRSKDIQTLVP.

Belongs to the G-protein coupled receptor T2R family.

Its subcellular location is the membrane. In terms of biological role, putative taste receptor which may play a role in the perception of bitterness. The chain is Taste receptor type 2 member 125 from Rattus norvegicus (Rat).